A 1177-amino-acid chain; its full sequence is DNA-directed RNA polymerase subunit beta' (1177 aa).

Positions 60, 62, 75, and 78 each coordinate Zn(2+). Mg(2+)-binding residues include Asp-450, Asp-452, and Asp-454. The Zn(2+) site is built by Cys-795, Cys-869, Cys-876, and Cys-879.

It belongs to the RNA polymerase beta' chain family. The RNAP catalytic core consists of 2 alpha, 1 beta, 1 beta' and 1 omega subunit. When a sigma factor is associated with the core the holoenzyme is formed, which can initiate transcription. Requires Mg(2+) as cofactor. It depends on Zn(2+) as a cofactor.

It catalyses the reaction RNA(n) + a ribonucleoside 5'-triphosphate = RNA(n+1) + diphosphate. DNA-dependent RNA polymerase catalyzes the transcription of DNA into RNA using the four ribonucleoside triphosphates as substrates. The protein is DNA-directed RNA polymerase subunit beta' of Clostridium botulinum (strain Alaska E43 / Type E3).